The sequence spans 238 residues: Probable 2-phosphosulfolactate phosphatase (238 aa).

It belongs to the ComB family. Mg(2+) serves as cofactor.

It carries out the reaction (2R)-O-phospho-3-sulfolactate + H2O = (2R)-3-sulfolactate + phosphate. The polypeptide is Probable 2-phosphosulfolactate phosphatase (Carboxydothermus hydrogenoformans (strain ATCC BAA-161 / DSM 6008 / Z-2901)).